Reading from the N-terminus, the 115-residue chain is Waprin-like protein (115 aa).

Residues 1–21 (MNRSLLAFAIVLVLLVAGTSS) form the signal peptide. The region spanning 23–69 (LFNKSGNCPMRNTVTSCTPRCIGDGECSSNQKCCPNKCGTTSCANSS) is the WAP domain. 4 disulfide bridges follow: Cys-30-Cys-56, Cys-39-Cys-60, Cys-43-Cys-55, and Cys-49-Cys-65.

This sequence belongs to the venom waprin family. Cys-rich waprin subfamily. As to expression, expressed by the venom gland.

It is found in the secreted. Functionally, antimicrobial peptides with activity against Gram-positive and Gram-negative bacteria as well as fungi. Recognizes carbohydrates in the microbial cell walls, and induces structural damage to them. Also inhibits microbial serine proteases, as well as mammalian elastases. Carbohydrates that are recognized are LPS, mannan, peptidoglycan, and N-acetl-D-glucosamine. The chain is Waprin-like protein from Tetramorium bicarinatum (Tramp ant).